Reading from the N-terminus, the 527-residue chain is UDP-glucuronosyltransferase 2A1 (527 aa).

A signal peptide spans 1–20 (MLKNILLWSLQLSLLGMSLG). Topologically, residues 21–490 (GNVLIWPMEG…LSWFQYHSLD (470 aa)) are extracellular. Asparagine 49 is a glycosylation site (N-linked (GlcNAc...) asparagine). Lysine 134 is subject to N6-succinyllysine. The N-linked (GlcNAc...) asparagine glycan is linked to asparagine 313. The chain crosses the membrane as a helical span at residues 491-507 (VIGFLLACMASAILLVI). Residues 508 to 527 (KCCLFVFQKIGKTXKKNKRD) are Cytoplasmic-facing.

This sequence belongs to the UDP-glycosyltransferase family. Olfactory epithelium. Mainly found in the sustentacular cells and to a lesser extent in Bowman's gland cells. Also expressed in the olfactory sensory neuron nuclei. Neuronal localization within the olfactory bulb is mainly found in the deeper granular cells.

The protein resides in the membrane. It carries out the reaction glucuronate acceptor + UDP-alpha-D-glucuronate = acceptor beta-D-glucuronoside + UDP + H(+). The enzyme catalyses 16beta,17beta-estriol + UDP-alpha-D-glucuronate = 16beta,17beta-estriol 16-O-(beta-D-glucuronate) + UDP + H(+). It catalyses the reaction 16alpha,17alpha-estriol + UDP-alpha-D-glucuronate = 16alpha,17alpha-estriol 16-O-(beta-D-glucuronate) + UDP + H(+). The catalysed reaction is 17alpha-estradiol + UDP-alpha-D-glucuronate = 17alpha-estradiol 17-O-(beta-D-glucuronate) + UDP + H(+). It carries out the reaction 17alpha-estradiol + UDP-alpha-D-glucuronate = 17alpha-estradiol 3-O-(beta-D-glucuronate) + UDP + H(+). The enzyme catalyses 17beta-estradiol + UDP-alpha-D-glucuronate = 17beta-estradiol 3-O-(beta-D-glucuronate) + UDP + H(+). It catalyses the reaction 17beta-estradiol + UDP-alpha-D-glucuronate = 17beta-estradiol 17-O-(beta-D-glucuronate) + UDP + H(+). The catalysed reaction is testosterone + UDP-alpha-D-glucuronate = testosterone 17-O-(beta-D-glucuronate) + UDP + H(+). It carries out the reaction epitestosterone + UDP-alpha-D-glucuronate = epitestosterone 17-O-(beta-D-glucuronate) + UDP + H(+). The enzyme catalyses lithocholate + UDP-alpha-D-glucuronate = lithocholoyl-3-O-(beta-D-glucuronate) + UDP + H(+). It catalyses the reaction lithocholate + UDP-alpha-D-glucuronate = lithocholoyl-24-O-(beta-D-glucuronate) + UDP. The catalysed reaction is deoxycholate + UDP-alpha-D-glucuronate = deoxycholoyl-24-O-(beta-D-glucuronate) + UDP. It carries out the reaction hyodeoxycholate + UDP-alpha-D-glucuronate = hyodeoxycholate 6-O-(beta-D-glucuronate) + UDP + H(+). The enzyme catalyses hyocholate + UDP-alpha-D-glucuronate = hyocholoyl-24-O-(beta-D-glucuronate) + UDP. In terms of biological role, UDP-glucuronosyltransferase (UGT) that catalyzes phase II biotransformation reactions in which lipophilic substrates are conjugated with glucuronic acid to increase the metabolite's water solubility, thereby facilitating excretion into either the urine or bile. Essential for the elimination and detoxification of drugs, xenobiotics and endogenous compounds. Catalyzes the glucuronidation of endogenous steroid hormones such as androgens (testosterones) and estrogens (estradiol and estriol). Contributes to bile acid (BA) detoxification by catalyzing the glucuronidation of BA substrates, which are natural detergents for dietary lipids absorption. Shows a high affinity to aliphatic odorants such as citronellol as well as olfactory tissue specificity, and therefore may be involved in olfaction. The sequence is that of UDP-glucuronosyltransferase 2A1 from Rattus norvegicus (Rat).